The following is a 1614-amino-acid chain: MSARRQELQDRAIVKIAAHLPDLIVYGDFSPERPSVKCFDGVLMFVDISGFTAMTEKFSTAMYMDRGAEQLVEILNYYISAIVEKVLIFGGDILKFAGDALLALWKVERKQLKNIITVVIKCSLEIHGLFEAKEAEEGLDIRVKIGLAAGHITMLVFGDETRNYFLVIGQAVDDVRLAQNMAQMNDVILSPNCWQLCDRSMIEIERIPDQRAVKVSFLKPPPTFNFDEFFTKCMGFMDYYPSGDHKNFLRLACMLESDPELELSLQKYVMEIILKQIDDKQLRGYLSELRPVTIVFVNLMFKEQDKVEVIGSAIQAACVHITSVLKVFRGQINKVFMFDKGCSFLCVFGFPGEKAPDEITHALESAVDIFDFCSQVHKIRTVSIGVASGIVFCGIVGHTVRHEYTVIGQKVNIAARMMMYYPGIVSCDSVTYDGSNLPAYFFKELPKKVMKGVADPGPVYQCLGLNEKVMFGMAYLICNRYEGYPLLGRVREIDYFMSTMKDFLMTNCSRVLMYEGLPGYGKSQVLMEIEYLASQHENHRAVAIALTKISFHQNFYTIQILMANVLGLDTCKHYKERQTNLQNRVKTLLDEKFHCLLNDIFHVQFPVSREMSRMSKIRKQKQLEALFMKILAQTVREERIIFIIDEAQFVDGTSWAFIEKLIRSMPIFIVMSLAPFSEVPCAAANAIMKNRNTTYITLGTMQPQEIRDKVCVDLSVSSIPRELDSYLVEGSCGIPYYCEELLKNLDHHRVLLFQQAETEQKTNVTWNNMFKHSVRPTDDMQLFTSISEGQKEVCYLVSGVRLNNLSPPASLKEISLVQLDSMSLSHQMLVRCAAIIGLTFTTELLFEILPCWNMKMMIKALATLVESNVFNCFRSSKDLQLALKQNVPTFEVHYRSLALKLKEGLTYGEEEELREMEGEVVECRILRFCRPIMQKTAYELWLKDQKKVLHLKCARFLEESAHRCNHCRNVDFIPYHHFIVDIRLNTLDMDTVKRMVTSQGFKIDEEEAIFSKSELPRKYKFPENLSITEIREKILHFFDNVILKMKSSPNDIIPLESCQCKELLQIVILPLAQHFVALEENNKALYYFLELASAYLILGDNYNAYMYLGEGERLLKSLTNEDSWSQTFEYATFYSLKAEVCFNMGQMVLAKKMLRKALKLLNRMFPCNLLTLTFQMHVEKNRLSHFMNQHTQEGSVPGKKLAQLYLQASCFSLLWRIYSLNFFFHYKYYGHLAAMMEMNTSLETQNDFQIIKAYLDFSLYHHLAGYQGVWFKYEILVMEQLLNLPLKGEAIEIMAYTADTLGHIKFLMGHLDLAIELGSRAHRMWSLLRNPNKYQMVLCRLSKPLFLKSRYKHLVQVLGWLWDLSVTEEDIFSKAFFYFVCLDIMLYSGFIYRTFEECLEFIHHNEDNRILKFQSGLLLGLYSCIAVWYARLQEWDNFNKFSDRAKHLVTRRTPTVLYYEGISRYMEGQVLHLQKQIEEQAENAQDSGVEILKALETLVAQNTTGPVFYPRLYHLMAYVCILMGDGHSCDFFLNTALELSETHGNLLEKCWLSMSKEWWYSASELTGDQWLQTVLSLPSWDKIVSGKGGQRKRSWSWFCPPNFSMVSWSQPQCA.

2 Guanylate cyclase domains span residues Val-42–Gln-179 and Thr-293–Met-418. The Mg(2+) site is built by Asp-47 and Ile-48. Asp-47–Thr-52 serves as a coordination point for ATP. Position 95 (Lys-95) interacts with hydrogencarbonate. Position 99 (Asp-99) interacts with Mg(2+). The ATP site is built by Asp-99 and Lys-144. Hydrogencarbonate is bound by residues Val-167, Arg-176, and Met-337. ATP-binding positions include Val-406 and Asn-412 to Arg-416.

It belongs to the adenylyl cyclase class-4/guanylyl cyclase family. Mg(2+) serves as cofactor. Requires Mn(2+) as cofactor. In terms of tissue distribution, expressed in testis.

The protein resides in the cell membrane. The protein localises to the cytoplasm. Its subcellular location is the cytoskeleton. It is found in the perinuclear region. It localises to the nucleus. The protein resides in the cell projection. The protein localises to the cilium. Its subcellular location is the mitochondrion. The catalysed reaction is ATP = 3',5'-cyclic AMP + diphosphate. Activated by manganese or magnesium ions. In the presence of magnesium ions, the enzyme is activated by bicarbonate. Calcium mildly increases the enzyme activity, also in the presence of magnesium ions. Its function is as follows. Catalyzes the formation of the signaling molecule cAMP. May function as sensor that mediates responses to changes in cellular bicarbonate and CO(2) levels. Has a critical role in mammalian spermatogenesis by producing the cAMP which regulates cAMP-responsive nuclear factors indispensable for sperm maturation in the epididymis. Induces capacitation, the maturational process that sperm undergo prior to fertilization. Involved in ciliary beat regulation. This chain is Adenylate cyclase type 10 (Adcy10), found in Mus musculus (Mouse).